We begin with the raw amino-acid sequence, 275 residues long: Malonyl-[acyl-carrier protein] O-methyltransferase (275 aa).

It belongs to the methyltransferase superfamily.

The catalysed reaction is malonyl-[ACP] + S-adenosyl-L-methionine = malonyl-[ACP] methyl ester + S-adenosyl-L-homocysteine. It functions in the pathway cofactor biosynthesis; biotin biosynthesis. In terms of biological role, converts the free carboxyl group of a malonyl-thioester to its methyl ester by transfer of a methyl group from S-adenosyl-L-methionine (SAM). It allows to synthesize pimeloyl-ACP via the fatty acid synthetic pathway. This is Malonyl-[acyl-carrier protein] O-methyltransferase from Methylococcus capsulatus (strain ATCC 33009 / NCIMB 11132 / Bath).